Consider the following 231-residue polypeptide: ATP-dependent dethiobiotin synthetase BioD 2 (231 aa).

13–18 (SVGKTV) is an ATP binding site. Mg(2+) is bound at residue threonine 17. Lysine 38 is a catalytic residue. ATP is bound by residues aspartate 55, 112–115 (EGTG), 172–173 (NR), 201–203 (PYL), and glutamine 208. Aspartate 55 and glutamate 112 together coordinate Mg(2+).

This sequence belongs to the dethiobiotin synthetase family. In terms of assembly, homodimer. Mg(2+) serves as cofactor.

It localises to the cytoplasm. The catalysed reaction is (7R,8S)-7,8-diammoniononanoate + CO2 + ATP = (4R,5S)-dethiobiotin + ADP + phosphate + 3 H(+). Its pathway is cofactor biosynthesis; biotin biosynthesis; biotin from 7,8-diaminononanoate: step 1/2. Functionally, catalyzes a mechanistically unusual reaction, the ATP-dependent insertion of CO2 between the N7 and N8 nitrogen atoms of 7,8-diaminopelargonic acid (DAPA, also called 7,8-diammoniononanoate) to form a ureido ring. In Salmonella typhi, this protein is ATP-dependent dethiobiotin synthetase BioD 2.